The chain runs to 365 residues: MDFKLTVLPGDGIGPEVMDEGLKVLNAVAKKYKHTFKYQYGLIGGCCIDKEGVALSPAALAMCKKSDAVLLAAVGDPRFDDPKLPVHPEDGLLALRKGLGLFANIRPVKVAPSLVNSTPIKAEIVKGTDFIFIRELTGGVYFAKPKKRWTTPAGIRKATDSMTYSENEIERIVRVGFELAKNRKKKLVSVDKANVLLSSRLWRQIVIEVAKDYPEVKVEHVLVDACAMKLILAPTYFDVIVTENLFGDILTDEASMLAGSMGMLPSASLAGIPAKGTKIFGLYEPIHGSAPTIAKQNIANPIATILSIAMMLRYSCGLETEAVEIESAVDKVLAAGYATIDIFKEGNTKLGTAEMGNQITKMIGG.

Residues Arg-96, Arg-106, Arg-134, and Asp-224 each contribute to the substrate site. Residues Asp-224, Asp-248, and Asp-252 each coordinate Mg(2+). Residue 288–300 participates in NAD(+) binding; it reads GSAPTIAKQNIAN.

The protein belongs to the isocitrate and isopropylmalate dehydrogenases family. LeuB type 1 subfamily. As to quaternary structure, homodimer. The cofactor is Mg(2+). Mn(2+) serves as cofactor.

Its subcellular location is the cytoplasm. The enzyme catalyses (2R,3S)-3-isopropylmalate + NAD(+) = 4-methyl-2-oxopentanoate + CO2 + NADH. It participates in amino-acid biosynthesis; L-leucine biosynthesis; L-leucine from 3-methyl-2-oxobutanoate: step 3/4. In terms of biological role, catalyzes the oxidation of 3-carboxy-2-hydroxy-4-methylpentanoate (3-isopropylmalate) to 3-carboxy-4-methyl-2-oxopentanoate. The product decarboxylates to 4-methyl-2 oxopentanoate. The polypeptide is 3-isopropylmalate dehydrogenase (Dehalococcoides mccartyi (strain CBDB1)).